Reading from the N-terminus, the 191-residue chain is Thymidylate kinase (191 aa).

Gly7–Ser14 contacts ATP.

This sequence belongs to the thymidylate kinase family.

The catalysed reaction is dTMP + ATP = dTDP + ADP. Phosphorylation of dTMP to form dTDP in both de novo and salvage pathways of dTTP synthesis. The protein is Thymidylate kinase of Sulfurimonas denitrificans (strain ATCC 33889 / DSM 1251) (Thiomicrospira denitrificans (strain ATCC 33889 / DSM 1251)).